The primary structure comprises 592 residues: Guanylate-binding protein 1 (592 aa).

Residues 1 to 311 (MASEIHMTGP…NAISSGDLPC (311 aa)) form a GTPase domain (Globular) region. Residues 35-278 (TQPMVVVAIV…FCSYIFSNSK (244 aa)) enclose the GB1/RHD3-type G domain. GTP contacts are provided by residues 45–52 (GLYRTGKS), 67–69 (LGS), and 97–101 (DTEGL). A Phosphoserine; by PIM1 modification is found at S156. Residues K207, K209, K210, K382, K562, K567, K573, and K587 each participate in a (Microbial infection) Glycyl lysine isopeptide (Lys-Gly) (interchain with G-Cter in ubiquitin) cross-link. C589 bears the Cysteine methyl ester mark. C589 is lipidated: S-farnesyl cysteine. Phosphothreonine; by PIM1 is present on T590. The propeptide at 590–592 (TIS) is removed in mature form.

The protein belongs to the TRAFAC class dynamin-like GTPase superfamily. GB1/RHD3 GTPase family. GB1 subfamily. Homodimer; homodimerization occurs upon GTP-binding and is required for the second hydrolysis step from GDP to GMP. Undergoes conformational changes and oligomerization upon GTP-binding and hydrolysis. Heterodimer with other family members, including GBP2, GBP3, GBP4 and GBP5. Dimerization regulates subcellular location to membranous structures. Interacts with SQSTM1. Interacts (when phosphorylated) with 14-3-3 protein sigma (SFN); leading to GBP1 retention in the cytosol and inactivation. In terms of processing, isoprenylation is required for proper subcellular location. Phosphorylated at Ser-156 by PIM1 in absence of infection, inhibits GBP1: phosphorylation promotes interaction with 14-3-3 protein sigma (SFN), leading to GBP1 retention in the cytosol. Dephosphorylated in response to infection, liberating GBP1. Post-translationally, (Microbial infection) Ubiquitinated by S.flexneri IpaH9.8, leading to its degradation by the proteasome, thereby preventing its ability to promote host defense against bacterial infection.

It localises to the cytoplasmic vesicle membrane. The protein resides in the golgi apparatus membrane. It is found in the cell membrane. The protein localises to the cytoplasm. Its subcellular location is the cytosol. It localises to the secreted. The enzyme catalyses GTP + H2O = GDP + phosphate + H(+). The catalysed reaction is GDP + H2O = GMP + phosphate + H(+). In terms of biological role, interferon (IFN)-inducible GTPase that plays important roles in innate immunity against a diverse range of bacterial, viral and protozoan pathogens. Hydrolyzes GTP to GMP in two consecutive cleavage reactions: GTP is first hydrolyzed to GDP and then to GMP in a processive manner. Following infection, recruited to the pathogen-containing vacuoles or vacuole-escaped bacteria and promotes both inflammasome assembly and autophagy. Acts as a positive regulator of inflammasome assembly by facilitating the detection of inflammasome ligands from pathogens. Involved in the lysis of pathogen-containing vacuoles, releasing pathogens into the cytosol. Following pathogen release in the cytosol, forms a protein coat in a GTPase-dependent manner that encapsulates pathogens and promotes the detection of ligands by pattern recognition receptors. Plays a key role in inflammasome assembly in response to infection by Gram-negative bacteria: following pathogen release in the cytosol, forms a protein coat that encapsulates Gram-negative bacteria and directly binds to lipopolysaccharide (LPS), disrupting the O-antigen barrier and unmasking lipid A that is that detected by the non-canonical inflammasome effector CASP4/CASP11. Also promotes recruitment of proteins that mediate bacterial cytolysis, leading to release double-stranded DNA (dsDNA) that activates the AIM2 inflammasome. Involved in autophagy by regulating bacteriolytic peptide generation via its interaction with ubiquitin-binding protein SQSTM1, which delivers monoubiquitinated proteins to autolysosomes for the generation of bacteriolytic peptides. Confers protection to several pathogens, including the bacterial pathogens L.monocytogenes and M.bovis BCG as well as the protozoan pathogen T.gondii. Exhibits antiviral activity against influenza virus. The chain is Guanylate-binding protein 1 from Homo sapiens (Human).